The sequence spans 509 residues: Histidine ammonia-lyase (509 aa).

Positions 144 to 146 form a cross-link, 5-imidazolinone (Ala-Gly); sequence ASG. Ser145 carries the 2,3-didehydroalanine (Ser) modification.

The protein belongs to the PAL/histidase family. In terms of processing, contains an active site 4-methylidene-imidazol-5-one (MIO), which is formed autocatalytically by cyclization and dehydration of residues Ala-Ser-Gly.

It localises to the cytoplasm. It catalyses the reaction L-histidine = trans-urocanate + NH4(+). It participates in amino-acid degradation; L-histidine degradation into L-glutamate; N-formimidoyl-L-glutamate from L-histidine: step 1/3. The sequence is that of Histidine ammonia-lyase from Rhodospirillum centenum (strain ATCC 51521 / SW).